We begin with the raw amino-acid sequence, 306 residues long: D-alanine--D-alanine ligase (306 aa).

The ATP-grasp domain occupies 101-303 (KQVWQGIGLT…FSQLVVKILE (203 aa)). Position 134-189 (134-189 (VADLGLPLIVKPSLEGSSVGMTKVNEISELRGALEAAFRYDVDLLVEKWLHGPEYT)) interacts with ATP. 3 residues coordinate Mg(2+): Asp257, Glu270, and Asn272.

Belongs to the D-alanine--D-alanine ligase family. Mg(2+) serves as cofactor. Mn(2+) is required as a cofactor.

The protein localises to the cytoplasm. The catalysed reaction is 2 D-alanine + ATP = D-alanyl-D-alanine + ADP + phosphate + H(+). It functions in the pathway cell wall biogenesis; peptidoglycan biosynthesis. Functionally, cell wall formation. The sequence is that of D-alanine--D-alanine ligase from Photorhabdus laumondii subsp. laumondii (strain DSM 15139 / CIP 105565 / TT01) (Photorhabdus luminescens subsp. laumondii).